We begin with the raw amino-acid sequence, 197 residues long: MFTSAIRLSSQRLFASQPSVTAAALRSTATTLPLRSYSQPASLQDSSILTWSDFFKLRKQQRRINVGSSLFTALLGCNVSWAYLSTMEIDPTQMLFGFDPLTVISAGIIASGALGYLLGPIVGSQVFKLSHNQQLAQFNNKNKEFLKHIINNRVDASSQSFSNPVPDYYGEKIGSLKEYKQWLRDCHAYAKKAKEFL.

The transit peptide at 1–14 directs the protein to the mitochondrion; it reads MFTSAIRLSSQRLF. 2 helical membrane-spanning segments follow: residues 64–84 and 103–123; these read INVGSSLFTALLGCNVSWAYL and VISAGIIASGALGYLLGPIVG.

This sequence belongs to the PAM17 family. Component of the PAM complex, at least composed of mtHsp70, MGE1, TIM44, PAM16, PAM17 and PAM18/TIM14.

It is found in the mitochondrion inner membrane. In terms of biological role, component of the PAM complex, a complex required for the translocation of transit peptide-containing proteins from the inner membrane into the mitochondrial matrix in an ATP-dependent manner. In the complex, it is required to organize PAM16-PAM18 (TIM16-TIM14) heterodimer. This is Presequence translocated-associated motor subunit PAM17, mitochondrial (PAM17) from Saccharomyces cerevisiae (strain ATCC 204508 / S288c) (Baker's yeast).